A 709-amino-acid chain; its full sequence is Elongation factor G (709 aa).

A tr-type G domain is found at 8–297 (ANTRNIGIMA…AVIDYLPSPL (290 aa)). Residues 17–24 (AHVDAGKT), 81–85 (DTPGH), and 135–138 (NKMD) each bind GTP.

The protein belongs to the TRAFAC class translation factor GTPase superfamily. Classic translation factor GTPase family. EF-G/EF-2 subfamily.

It is found in the cytoplasm. Its function is as follows. Catalyzes the GTP-dependent ribosomal translocation step during translation elongation. During this step, the ribosome changes from the pre-translocational (PRE) to the post-translocational (POST) state as the newly formed A-site-bound peptidyl-tRNA and P-site-bound deacylated tRNA move to the P and E sites, respectively. Catalyzes the coordinated movement of the two tRNA molecules, the mRNA and conformational changes in the ribosome. In Lactococcus lactis subsp. lactis (strain IL1403) (Streptococcus lactis), this protein is Elongation factor G.